We begin with the raw amino-acid sequence, 477 residues long: Transmembrane and coiled-coil domain protein 3 (477 aa).

The residue at position 46 (S46) is a Phosphoserine. The stretch at K112–K153 forms a coiled coil. Disordered stretches follow at residues K168–M188 and P249–G277. S253 carries the phosphoserine modification. A compositionally biased stretch (polar residues) spans S258–F273. A coiled-coil region spans residues D282–Q398. Helical transmembrane passes span V417–S437 and F450–I470.

It belongs to the TEX28 family. In terms of assembly, may form homodimers and heterodimers with TMCC2 or TMCC3 via the coiled-coil domains. Interacts with ribosomal proteins RPL4 and RPS6. As to expression, widely expressed, with highest levels in brain, spinal cord and testis.

Its subcellular location is the endoplasmic reticulum membrane. The chain is Transmembrane and coiled-coil domain protein 3 from Homo sapiens (Human).